The following is a 371-amino-acid chain: MSLISKSLARIECSPFFYPRASEITTGKRITSPQIRLYTAAAVGGKTGNGERKQRAKAPAKTPEAVTPVKPLEIASVTATTENELPRPNEIAYESEVANWVNLIGFVDQPVQFEASSDGKFWAGTVISQRSASDSSGFWIPIIFEGDLAKTAARYVSKDDQIHVSGKLFIDSPPPNMTYAQANVQVLVQNLNFIQPMSPSPSPFMVMSSSEKEESGIKKQPARAKQDIVIDEASDSWNHLIENPKEWWDHRENKVNGLVKPRHPDFKSKDSSFSLWLNKAPNWVLPKLEGLEFDVLVPKARVVKQLKGEESWKDLVQNPDKWWDNRIDKRNAKAPDFKHKETGEALWLNESPTWVLPKLPPVKKKQESIVF.

Residues 1 to 20 constitute a chloroplast transit peptide; that stretch reads MSLISKSLARIECSPFFYPR. Residues 45–64 form a disordered region; sequence GKTGNGERKQRAKAPAKTPE. Residues 97-195 form the SSB domain; sequence VANWVNLIGF…VLVQNLNFIQ (99 aa). 2 PDF region regions span residues 237-289 and 312-360; these read WNHL…PKLE and WKDL…PKLP.

As to expression, expressed in the floral abscission zone.

The protein localises to the plastid. Its subcellular location is the chloroplast. In terms of biological role, binds preferentially single-stranded DNA. Does not bind to RNA. This Arabidopsis thaliana (Mouse-ear cress) protein is Protein OSB2, chloroplastic (OSB2).